Reading from the N-terminus, the 152-residue chain is SsrA-binding protein (152 aa).

The protein belongs to the SmpB family.

It is found in the cytoplasm. Its function is as follows. Required for rescue of stalled ribosomes mediated by trans-translation. Binds to transfer-messenger RNA (tmRNA), required for stable association of tmRNA with ribosomes. tmRNA and SmpB together mimic tRNA shape, replacing the anticodon stem-loop with SmpB. tmRNA is encoded by the ssrA gene; the 2 termini fold to resemble tRNA(Ala) and it encodes a 'tag peptide', a short internal open reading frame. During trans-translation Ala-aminoacylated tmRNA acts like a tRNA, entering the A-site of stalled ribosomes, displacing the stalled mRNA. The ribosome then switches to translate the ORF on the tmRNA; the nascent peptide is terminated with the 'tag peptide' encoded by the tmRNA and targeted for degradation. The ribosome is freed to recommence translation, which seems to be the essential function of trans-translation. This is SsrA-binding protein from Helicobacter acinonychis (strain Sheeba).